A 266-amino-acid chain; its full sequence is UPF0328 protein ECU05_1610/ECU11_0120 (266 aa).

It belongs to the UPF0328 family.

In Encephalitozoon cuniculi (strain GB-M1) (Microsporidian parasite), this protein is UPF0328 protein ECU05_1610/ECU11_0120.